Reading from the N-terminus, the 486-residue chain is ATP synthase subunit beta (486 aa).

167–174 is a binding site for ATP; that stretch reads GGAGVGKT.

Belongs to the ATPase alpha/beta chains family. F-type ATPases have 2 components, CF(1) - the catalytic core - and CF(0) - the membrane proton channel. CF(1) has five subunits: alpha(3), beta(3), gamma(1), delta(1), epsilon(1). CF(0) has three main subunits: a(1), b(2) and c(9-12). The alpha and beta chains form an alternating ring which encloses part of the gamma chain. CF(1) is attached to CF(0) by a central stalk formed by the gamma and epsilon chains, while a peripheral stalk is formed by the delta and b chains.

The protein localises to the cell inner membrane. It catalyses the reaction ATP + H2O + 4 H(+)(in) = ADP + phosphate + 5 H(+)(out). In terms of biological role, produces ATP from ADP in the presence of a proton gradient across the membrane. The catalytic sites are hosted primarily by the beta subunits. The sequence is that of ATP synthase subunit beta from Anaplasma marginale (strain St. Maries).